A 283-amino-acid polypeptide reads, in one-letter code: 4-diphosphocytidyl-2-C-methyl-D-erythritol kinase (283 aa).

K10 is an active-site residue. 94 to 104 (PVAAGLAGGSS) is an ATP binding site. Residue D136 is part of the active site.

Belongs to the GHMP kinase family. IspE subfamily.

The enzyme catalyses 4-CDP-2-C-methyl-D-erythritol + ATP = 4-CDP-2-C-methyl-D-erythritol 2-phosphate + ADP + H(+). The protein operates within isoprenoid biosynthesis; isopentenyl diphosphate biosynthesis via DXP pathway; isopentenyl diphosphate from 1-deoxy-D-xylulose 5-phosphate: step 3/6. Functionally, catalyzes the phosphorylation of the position 2 hydroxy group of 4-diphosphocytidyl-2C-methyl-D-erythritol. This is 4-diphosphocytidyl-2-C-methyl-D-erythritol kinase from Enterococcus faecalis (strain ATCC 700802 / V583).